Reading from the N-terminus, the 222-residue chain is Protein-L-isoaspartate O-methyltransferase (222 aa).

Residue Ser-73 is part of the active site.

Belongs to the methyltransferase superfamily. L-isoaspartyl/D-aspartyl protein methyltransferase family.

Its subcellular location is the cytoplasm. The catalysed reaction is [protein]-L-isoaspartate + S-adenosyl-L-methionine = [protein]-L-isoaspartate alpha-methyl ester + S-adenosyl-L-homocysteine. Its function is as follows. Catalyzes the methyl esterification of L-isoaspartyl residues in peptides and proteins that result from spontaneous decomposition of normal L-aspartyl and L-asparaginyl residues. It plays a role in the repair and/or degradation of damaged proteins. In Chromobacterium violaceum (strain ATCC 12472 / DSM 30191 / JCM 1249 / CCUG 213 / NBRC 12614 / NCIMB 9131 / NCTC 9757 / MK), this protein is Protein-L-isoaspartate O-methyltransferase.